We begin with the raw amino-acid sequence, 584 residues long: Protein FAM117B (584 aa).

Positions 1-214 (MSQRVRRNGS…SSSSSIIRRT (214 aa)) are disordered. S10 is subject to Phosphoserine. Residues 53–79 (TRGGGGGGNNGGNGGASGPSGGGGSGG) show a composition bias toward gly residues. Positions 80 to 90 (PRTASRSTSPT) are enriched in low complexity. Residue S102 is modified to Phosphoserine. Residues 114-132 (TSTRGTSPTRGTAPGARSS) show a composition bias toward low complexity. Over residues 133–142 (PPRPQPPPPL) the composition is skewed to pro residues. Residues 145 to 154 (TVSSPSSSPT) show a composition bias toward polar residues. Low complexity predominate over residues 204–214 (SSSSSSIIRRT). Residues S206, S215, S216, and S268 each carry the phosphoserine modification. Disordered stretches follow at residues 227 to 461 (GHWP…SYMF) and 551 to 584 (STNT…EAEG). Residues 287–297 (RSKHSSRHHRD) show a composition bias toward basic residues. S340 is modified (phosphoserine). Residues 350–361 (IIIKETGEKEEQ) are compositionally biased toward basic and acidic residues. Positions 379-392 (QRSSSTRSIDTQTP) are enriched in polar residues. Residue S386 is modified to Phosphoserine. Residues 399-412 (SNNSSRSQSVSPTS) show a composition bias toward low complexity. Residues S444 and S452 each carry the phosphoserine modification.

In Mus musculus (Mouse), this protein is Protein FAM117B (Fam117b).